Reading from the N-terminus, the 180-residue chain is ATP-dependent protease subunit HslV (180 aa).

T6 is a catalytic residue. Residues A164, C167, and T170 each contribute to the Na(+) site.

It belongs to the peptidase T1B family. HslV subfamily. As to quaternary structure, a double ring-shaped homohexamer of HslV is capped on each side by a ring-shaped HslU homohexamer. The assembly of the HslU/HslV complex is dependent on binding of ATP.

It is found in the cytoplasm. It carries out the reaction ATP-dependent cleavage of peptide bonds with broad specificity.. With respect to regulation, allosterically activated by HslU binding. Functionally, protease subunit of a proteasome-like degradation complex believed to be a general protein degrading machinery. This is ATP-dependent protease subunit HslV from Borrelia duttonii (strain Ly).